A 281-amino-acid chain; its full sequence is Sulfur carrier protein FdhD (281 aa).

The active-site Cysteine persulfide intermediate is the Cys117.

This sequence belongs to the FdhD family.

Its subcellular location is the cytoplasm. In terms of biological role, required for formate dehydrogenase (FDH) activity. Acts as a sulfur carrier protein that transfers sulfur from IscS to the molybdenum cofactor prior to its insertion into FDH. The polypeptide is Sulfur carrier protein FdhD (Xanthomonas axonopodis pv. citri (strain 306)).